The primary structure comprises 202 residues: Transcriptional regulator SdrP (202 aa).

One can recognise an HTH crp-type domain in the interval 117 to 189; the sequence is QRLKNRMAAA…YGKIQLLDLK (73 aa). The H-T-H motif DNA-binding region spans 149–168; that stretch reads HDELAAAVGSVRETVTKVIG.

In terms of assembly, homodimer.

In terms of biological role, activates transcription. The consensus DNA-binding site of this transcriptional regulator is 5'-WWGTGAN(5-7)ACACWW-3' in which W is A or T and N is G, A, T or C. Regulated genes include those encoding proteins involved in nutrient and energy supply, redox control and polyadenylation of mRNA. Also regulates genes involved in oxidative stress response such as genes encoding manganese superoxide dismutase and catalase, and genes encoding a protein involved in nucleotide excision repair of damaged DNA and putative proteins involved in redox control, protein degradation and transcriptional regulation. This Thermus thermophilus (strain ATCC 27634 / DSM 579 / HB8) protein is Transcriptional regulator SdrP.